The chain runs to 332 residues: Invasin IpaD (332 aa).

The span at 1–25 (MNITTLTNSISTSSFSPNNTNGSST) shows a compositional bias: low complexity. Positions 1–43 (MNITTLTNSISTSSFSPNNTNGSSTETVNSDIKTTTSSHPVSS) are disordered. The span at 26-43 (ETVNSDIKTTTSSHPVSS) shows a compositional bias: polar residues. Positions 44 to 77 (LTMLNDTLHNIRTTNQALKKELSQKTLTKTSLEE) form a coiled coil. An ipaB binding region spans residues 192-267 (VNSLKKALEE…KSLDNLGGNG (76 aa)).

This sequence belongs to the invasin protein D family.

It is found in the secreted. Functionally, required for bacterial invasion of host cells. Controls IpaB and IpaC secretion, and the efficiency with which they are physically inserted into target cell membranes. These proteins are exported via T3SS to form a pore in the host membrane that allows the translocation of the other effectors into the host cytoplasm. Along with IpaB, is essential for both blocking secretion through the Mxi/Spa translocon in the absence of a secretion-inducing signal, and for controlling the level of secretion in the presence of this signal. The chain is Invasin IpaD (ipaD) from Shigella flexneri.